A 393-amino-acid polypeptide reads, in one-letter code: UDP-galactose translocator (393 aa).

A run of 10 helical transmembrane segments spans residues 3–23 (AVGS…AGAL), 37–57 (YISL…IRYA), 65–85 (FFAT…CLLL), 97–117 (LVLF…KLAV), 140–160 (TFQV…VLML), 169–189 (WASL…QAGG), 200–220 (GVGL…GVYF), 238–258 (LGLF…GTAV), 269–289 (PAVW…AVVV), and 315–335 (LFGF…IGAV). A disordered region spans residues 353-393 (APTSGPCTHQQPPGQPPPPQLSSHHGDLSTEPFLPKSVLVK).

This sequence belongs to the nucleotide-sugar transporter family. SLC35A subfamily. As to quaternary structure, interacts with SLC35A3; the interaction is reduced in the presence of SLC35A4. Found in a complex with SLC35A3 and SLC35A4.

Its subcellular location is the golgi apparatus membrane. It catalyses the reaction UMP(out) + UDP-alpha-D-galactose(in) = UMP(in) + UDP-alpha-D-galactose(out). The catalysed reaction is UDP-N-acetyl-alpha-D-galactosamine(in) + UMP(out) = UDP-N-acetyl-alpha-D-galactosamine(out) + UMP(in). The enzyme catalyses UMP(out) + UDP-alpha-D-glucose(in) = UMP(in) + UDP-alpha-D-glucose(out). It carries out the reaction UMP(out) + UDP-N-acetyl-alpha-D-glucosamine(in) = UMP(in) + UDP-N-acetyl-alpha-D-glucosamine(out). It catalyses the reaction UDP-alpha-D-galactose(in) + AMP(out) = UDP-alpha-D-galactose(out) + AMP(in). The catalysed reaction is UDP-alpha-D-galactose(in) + CMP(out) = UDP-alpha-D-galactose(out) + CMP(in). The enzyme catalyses UDP-N-acetyl-alpha-D-galactosamine(out) + UDP-alpha-D-galactose(in) = UDP-N-acetyl-alpha-D-galactosamine(in) + UDP-alpha-D-galactose(out). It carries out the reaction UDP-N-acetyl-alpha-D-glucosamine(out) + UDP-alpha-D-galactose(in) = UDP-N-acetyl-alpha-D-glucosamine(in) + UDP-alpha-D-galactose(out). It catalyses the reaction UDP-alpha-D-galactose(in) + UDP-alpha-D-glucose(out) = UDP-alpha-D-galactose(out) + UDP-alpha-D-glucose(in). The catalysed reaction is UMP(out) + CMP(in) = UMP(in) + CMP(out). The enzyme catalyses UMP(out) + AMP(in) = UMP(in) + AMP(out). Transports uridine diphosphate galactose (UDP-galactose) from the cytosol into the Golgi apparatus, functioning as an antiporter that exchanges UDP-galactose for UMP. It is also able to exchange UDP-galactose for AMP and CMP, and to transport UDP-N-acetylgalactosamine (UDP-GalNAc) and other nucleotide sugars. As a provider of UDP-galactose to galactosyltransferases present in the Golgi apparatus, it is necessary for globotriaosylceramide/globoside (Gb3Cer) synthesis from lactosylceramide. The sequence is that of UDP-galactose translocator from Bos taurus (Bovine).